The following is a 445-amino-acid chain: N-succinylarginine dihydrolase (445 aa).

Residues 19-28, asparagine 110, and 137-138 each bind substrate; these read AGLSYGNVAS and HR. Residue glutamate 174 is part of the active site. Substrate is bound at residue arginine 214. Histidine 250 is a catalytic residue. 2 residues coordinate substrate: aspartate 252 and asparagine 363. The active-site Nucleophile is cysteine 369.

This sequence belongs to the succinylarginine dihydrolase family. As to quaternary structure, homodimer.

It catalyses the reaction N(2)-succinyl-L-arginine + 2 H2O + 2 H(+) = N(2)-succinyl-L-ornithine + 2 NH4(+) + CO2. Its pathway is amino-acid degradation; L-arginine degradation via AST pathway; L-glutamate and succinate from L-arginine: step 2/5. In terms of biological role, catalyzes the hydrolysis of N(2)-succinylarginine into N(2)-succinylornithine, ammonia and CO(2). The sequence is that of N-succinylarginine dihydrolase from Aeromonas hydrophila subsp. hydrophila (strain ATCC 7966 / DSM 30187 / BCRC 13018 / CCUG 14551 / JCM 1027 / KCTC 2358 / NCIMB 9240 / NCTC 8049).